Reading from the N-terminus, the 503-residue chain is Aspartyl/glutamyl-tRNA(Asn/Gln) amidotransferase subunit B (503 aa).

The protein belongs to the GatB/GatE family. GatB subfamily. Heterotrimer of A, B and C subunits.

It catalyses the reaction L-glutamyl-tRNA(Gln) + L-glutamine + ATP + H2O = L-glutaminyl-tRNA(Gln) + L-glutamate + ADP + phosphate + H(+). The catalysed reaction is L-aspartyl-tRNA(Asn) + L-glutamine + ATP + H2O = L-asparaginyl-tRNA(Asn) + L-glutamate + ADP + phosphate + 2 H(+). In terms of biological role, allows the formation of correctly charged Asn-tRNA(Asn) or Gln-tRNA(Gln) through the transamidation of misacylated Asp-tRNA(Asn) or Glu-tRNA(Gln) in organisms which lack either or both of asparaginyl-tRNA or glutaminyl-tRNA synthetases. The reaction takes place in the presence of glutamine and ATP through an activated phospho-Asp-tRNA(Asn) or phospho-Glu-tRNA(Gln). In Cereibacter sphaeroides (strain KD131 / KCTC 12085) (Rhodobacter sphaeroides), this protein is Aspartyl/glutamyl-tRNA(Asn/Gln) amidotransferase subunit B.